The chain runs to 896 residues: Translation initiation factor IF-2 (896 aa).

2 disordered regions span residues 53 to 81 (HGGESAPTKMTLQRKSVSTLSVGSGSASK) and 117 to 301 (AEEA…ESMD). A compositionally biased stretch (polar residues) spans 60–79 (TKMTLQRKSVSTLSVGSGSA). The segment covering 117–227 (AEEAASKAKA…ESEKTGDHHV (111 aa)) has biased composition (basic and acidic residues). The span at 254 to 266 (ATPAPAAAPANTG) shows a compositional bias: low complexity. Over residues 273–282 (GKDNRRDSRN) the composition is skewed to basic and acidic residues. Over residues 283–294 (ARGGRNARNNRS) the composition is skewed to low complexity. The region spanning 394–563 (SRAPVVTIMG…LLEAEVLELK (170 aa)) is the tr-type G domain. The interval 403–410 (GHVDHGKT) is G1. GTP is bound at residue 403 to 410 (GHVDHGKT). The interval 428–432 (GITQH) is G2. The tract at residues 449–452 (DTPG) is G3. GTP is bound by residues 449 to 453 (DTPGH) and 503 to 506 (NKID). Residues 503–506 (NKID) form a G4 region. Residues 539–541 (SAK) form a G5 region.

It belongs to the TRAFAC class translation factor GTPase superfamily. Classic translation factor GTPase family. IF-2 subfamily.

It localises to the cytoplasm. One of the essential components for the initiation of protein synthesis. Protects formylmethionyl-tRNA from spontaneous hydrolysis and promotes its binding to the 30S ribosomal subunits. Also involved in the hydrolysis of GTP during the formation of the 70S ribosomal complex. This Shewanella sediminis (strain HAW-EB3) protein is Translation initiation factor IF-2.